The sequence spans 237 residues: MAAASASVLQRCIVSPAGRHSASLIFLHGSGDSGQGLRMWIKQVLNQDLTFQHIKIIYPTAPPRSYTPMKGGISNVWFDRFKITNDCPEHLESIDVMCQVLTDLIDEEVKSGIKKNRILIGGFSMGGSMAMHLAYRNHQDVAGVFALSSFLNKASAVYQALQKSNGVLPELFQCHGTADELVLHSWAEETNSMLKSLGVTTKLHSFPDVYHELSKTELDILKLWILTKLPGEMEKQK.

The residue at position 2 (Ala-2) is an N-acetylalanine. Residues Ser-124, Asp-179, and His-211 each act as charge relay system in the active site.

It belongs to the AB hydrolase superfamily. AB hydrolase 2 family.

Its subcellular location is the cytoplasm. It localises to the cytosol. The enzyme catalyses S-hexadecanoyl-L-cysteinyl-[protein] + H2O = L-cysteinyl-[protein] + hexadecanoate + H(+). Palmitoyl thioesterase that catalyzes depalmitoylation of CGAS and KCNMA1. Acts as a regulator of innate immunity by mediating depalmitoylation of CGAS, thereby preventing CGAS homodimerization and cyclic GMP-AMP synthase activity. Does not exhibit phospholipase nor triacylglycerol lipase activity, able to hydrolyze only short chain substrates due to its shallow active site. The polypeptide is Lysophospholipase-like protein 1 (Pongo abelii (Sumatran orangutan)).